The primary structure comprises 126 residues: Thioredoxin H-type 1 (126 aa).

The region spanning 2–120 (AANDATSSEE…LQQTIVKHAA (119 aa)) is the Thioredoxin domain. Active-site nucleophile residues include Cys-46 and Cys-49. A disulfide bridge links Cys-46 with Cys-49.

The protein belongs to the thioredoxin family. Plant H-type subfamily.

The protein localises to the cytoplasm. Participates in various redox reactions through the reversible oxidation of the active center dithiol to a disulfide. The H form is known to activate a number of cytosolic enzymes. This chain is Thioredoxin H-type 1, found in Nicotiana tabacum (Common tobacco).